Here is a 195-residue protein sequence, read N- to C-terminus: Calcineurin B homologous protein 1 (195 aa).

Residue G2 is the site of N-myristoyl glycine attachment. The Necessary for association with microtubule and interaction with GAPDH signature appears at G2–S6. EF-hand domains follow at residues S26–P61, I66–D101, S110–V145, and Q151–E186. The Ca(2+) site is built by D123, D125, D127, K129, and E134. Positions V138–I147 match the Nuclear export signal 1 motif. 4 residues coordinate Ca(2+): D164, D166, D168, and E175. Residues F176–V185 carry the Nuclear export signal 2 motif.

This sequence belongs to the calcineurin regulatory subunit family. CHP subfamily. As to quaternary structure, monomer. Interacts with STK17B; the interaction occurs in a calcium-independent manner and induces the translocation of CHP1 from the Golgi to the nucleus. Interacts with GAPDH; the interaction is direct, occurs in a N-myristoylation-dependent manner and facilitates the ability of CHP1 to bind microtubules. Interacts with KIF1B (via the C-terminal end of the kinesin-motor domain); the interaction occurs in a calcium-dependent manner. Associates (via C-terminal domain) with microtubules; the association occurs with polymerized microtubules during the cell cycle in a myristoylation- and calcium-independent manner and is enhanced by GAPDH. Interacts with PPP3CA. Interacts with SLC9A1/NHE1 (via the cytoplasmic C-terminal domain); the interaction occurs at the plasma membrane in a calcium-dependent manner and at a domain that is critical for growth factor stimulation of the exchanger. Interacts with SLC9A3; increases SLC9A3 trafficking and activity at the plasma membrane. Post-translationally, phosphorylated; decreased phosphorylation is associated with an increase in SLC9A1/NHE1 Na(+)/H(+) exchange activity. Phosphorylation occurs in serum-dependent manner. The phosphorylation state may regulate the binding to SLC9A1/NHE1. In terms of processing, both N-myristoylation and calcium-mediated conformational changes are essential for its function in exocytic traffic. N-myristoylation is required for its association with microtubules and interaction with GAPDH, but not for the constitutive association to membranes.

The protein resides in the nucleus. It localises to the cytoplasm. Its subcellular location is the cytoskeleton. It is found in the endomembrane system. The protein localises to the endoplasmic reticulum-Golgi intermediate compartment. The protein resides in the endoplasmic reticulum. It localises to the cell membrane. Its subcellular location is the membrane. Its function is as follows. Calcium-binding protein involved in different processes such as regulation of vesicular trafficking, plasma membrane Na(+)/H(+) exchanger and gene transcription. Involved in the constitutive exocytic membrane traffic. Mediates the association between microtubules and membrane-bound organelles of the endoplasmic reticulum and Golgi apparatus and is also required for the targeting and fusion of transcytotic vesicles (TCV) with the plasma membrane. Functions as an integral cofactor in cell pH regulation by controlling plasma membrane-type Na(+)/H(+) exchange activity. Affects the pH sensitivity of SLC9A1/NHE1 by increasing its sensitivity at acidic pH. Required for the stabilization and localization of SLC9A1/NHE1 at the plasma membrane. Inhibits serum- and GTPase-stimulated Na(+)/H(+) exchange. Plays a role as an inhibitor of ribosomal RNA transcription by repressing the nucleolar UBF1 transcriptional activity. May sequester UBF1 in the nucleoplasm and limit its translocation to the nucleolus. Associates to the ribosomal gene promoter. Acts as a negative regulator of the calcineurin/NFAT signaling pathway. Inhibits NFAT nuclear translocation and transcriptional activity by suppressing the calcium-dependent calcineurin phosphatase activity. Also negatively regulates the kinase activity of the apoptosis-induced kinase STK17B. Inhibits both STK17B auto- and substrate-phosphorylations in a calcium-dependent manner. The polypeptide is Calcineurin B homologous protein 1 (CHP1) (Bos taurus (Bovine)).